The sequence spans 188 residues: Small ribosomal subunit protein uS7 (188 aa).

Belongs to the universal ribosomal protein uS7 family. As to quaternary structure, part of the 30S ribosomal subunit.

Its function is as follows. One of the primary rRNA binding proteins, it binds directly to 16S rRNA where it nucleates assembly of the head domain of the 30S subunit. Is located at the subunit interface close to the decoding center. This chain is Small ribosomal subunit protein uS7, found in Methanococcus maripaludis (strain C6 / ATCC BAA-1332).